The sequence spans 426 residues: Serine--tRNA ligase (426 aa).

233–235 (TSE) is an L-serine binding site. An ATP-binding site is contributed by 264–266 (RSE). Glu-287 is a binding site for L-serine. 351 to 354 (EISS) contacts ATP. Ser-387 contributes to the L-serine binding site.

It belongs to the class-II aminoacyl-tRNA synthetase family. Type-1 seryl-tRNA synthetase subfamily. In terms of assembly, homodimer. The tRNA molecule binds across the dimer.

It is found in the cytoplasm. The enzyme catalyses tRNA(Ser) + L-serine + ATP = L-seryl-tRNA(Ser) + AMP + diphosphate + H(+). It catalyses the reaction tRNA(Sec) + L-serine + ATP = L-seryl-tRNA(Sec) + AMP + diphosphate + H(+). It functions in the pathway aminoacyl-tRNA biosynthesis; selenocysteinyl-tRNA(Sec) biosynthesis; L-seryl-tRNA(Sec) from L-serine and tRNA(Sec): step 1/1. Its function is as follows. Catalyzes the attachment of serine to tRNA(Ser). Is also able to aminoacylate tRNA(Sec) with serine, to form the misacylated tRNA L-seryl-tRNA(Sec), which will be further converted into selenocysteinyl-tRNA(Sec). This Colwellia psychrerythraea (strain 34H / ATCC BAA-681) (Vibrio psychroerythus) protein is Serine--tRNA ligase.